Reading from the N-terminus, the 327-residue chain is Malate dehydrogenase (327 aa).

An NAD(+)-binding site is contributed by 11 to 17 (GAAGQIS). Substrate-binding residues include arginine 92 and arginine 98. Residues asparagine 105, glutamine 112, and 129–131 (VGN) contribute to the NAD(+) site. Positions 131 and 162 each coordinate substrate. The active-site Proton acceptor is the histidine 187.

This sequence belongs to the LDH/MDH superfamily. MDH type 2 family.

The enzyme catalyses (S)-malate + NAD(+) = oxaloacetate + NADH + H(+). Functionally, catalyzes the reversible oxidation of malate to oxaloacetate. This is Malate dehydrogenase from Saccharophagus degradans (strain 2-40 / ATCC 43961 / DSM 17024).